Reading from the N-terminus, the 196-residue chain is Nucleoid occlusion factor SlmA (196 aa).

Residues 6–66 (RNRREEILQA…GLIEFVEDTL (61 aa)) form the HTH tetR-type domain. Residues 29 to 48 (TTAKLAANLGVSEAALYRHF) constitute a DNA-binding region (H-T-H motif). A coiled-coil region spans residues 108 to 135 (DALMGEHDRLRGRMEDLFNRIESSIKQI).

The protein belongs to the nucleoid occlusion factor SlmA family. As to quaternary structure, homodimer. Interacts with FtsZ.

Its subcellular location is the cytoplasm. The protein localises to the nucleoid. In terms of biological role, required for nucleoid occlusion (NO) phenomenon, which prevents Z-ring formation and cell division over the nucleoid. Acts as a DNA-associated cell division inhibitor that binds simultaneously chromosomal DNA and FtsZ, and disrupts the assembly of FtsZ polymers. SlmA-DNA-binding sequences (SBS) are dispersed on non-Ter regions of the chromosome, preventing FtsZ polymerization at these regions. The polypeptide is Nucleoid occlusion factor SlmA (Idiomarina loihiensis (strain ATCC BAA-735 / DSM 15497 / L2-TR)).